The following is a 244-amino-acid chain: Reticulon-like protein B7 (244 aa).

Residues 70–244 (PADVLLWRDK…EAKFLSKIPH (175 aa)) enclose the Reticulon domain. The next 3 membrane-spanning stretches (helical) occupy residues 80–100 (KVTLGLLSAVTVIWLLFGFGG), 103–123 (LLTSLCRGSILFLLLSFLWSN), and 172–192 (FVMAVIGLWLVSVIGNWFSFL).

It is found in the endoplasmic reticulum membrane. The protein is Reticulon-like protein B7 (RTNLB7) of Arabidopsis thaliana (Mouse-ear cress).